The sequence spans 250 residues: MSRHRFNNVQIKALPGGLMAHHEPDADGGQPGSQKLPMWPSERIPPGGAGAFHSAKVQYSKETADLIRLLVKESKMSMLVRKQIDESLRNGEPLPLPEPPRPNTNNDPDKETLAILDRARNAKRKNLRQIEASGAYKQSYYRPPADNRMHGEKAKSQLQFTMAGTHLPDPAIKPRRRPREEQLVTEEDLINELLDQINERAEWLTEMESMGQGKKYRPEIRDQIAERLRRIQALESKMKMKSNGGFRFVD.

The tract at residues 86-110 (ESLRNGEPLPLPEPPRPNTNNDPDK) is disordered.

Belongs to the UPF0193 (EVG1) family.

This is UPF0193 protein EVG1 homolog from Drosophila melanogaster (Fruit fly).